A 402-amino-acid polypeptide reads, in one-letter code: S-adenosylmethionine synthase (402 aa).

An ATP-binding site is contributed by histidine 15. Mg(2+) is bound at residue aspartate 17. Glutamate 43 contacts K(+). 2 residues coordinate L-methionine: glutamate 56 and glutamine 99. The interval 99 to 109 is flexible loop; the sequence is QSPDIAQGVDT. ATP-binding positions include 174–176, 247–248, aspartate 256, 262–263, alanine 279, and lysine 283; these read DGK, RF, and RK. An L-methionine-binding site is contributed by aspartate 256. Lysine 287 is a binding site for L-methionine.

The protein belongs to the AdoMet synthase family. As to quaternary structure, homotetramer; dimer of dimers. The cofactor is Mg(2+). K(+) serves as cofactor.

The protein localises to the cytoplasm. It carries out the reaction L-methionine + ATP + H2O = S-adenosyl-L-methionine + phosphate + diphosphate. It participates in amino-acid biosynthesis; S-adenosyl-L-methionine biosynthesis; S-adenosyl-L-methionine from L-methionine: step 1/1. Its function is as follows. Catalyzes the formation of S-adenosylmethionine (AdoMet) from methionine and ATP. The overall synthetic reaction is composed of two sequential steps, AdoMet formation and the subsequent tripolyphosphate hydrolysis which occurs prior to release of AdoMet from the enzyme. This chain is S-adenosylmethionine synthase, found in Streptomyces coelicolor (strain ATCC BAA-471 / A3(2) / M145).